The primary structure comprises 541 residues: Lipase-like PAD4 (541 aa).

The active-site Nucleophile is S118. Active-site charge relay system residues include D178 and H229.

The protein belongs to the AB hydrolase superfamily. Lipase family. Part of a nuclear complex made of EDS1, SG101 and PAD4 that can be redirected to the cytoplasm in the presence of an extranuclear form of EDS1. Sabilized by direct interaction with EDS1 in infected leaves. Part of a nuclear protein complex made of VICTR, PAD4 and EDS1. Interacts with VICTR. Interacts with EDS1.

It is found in the nucleus. Its subcellular location is the cytoplasm. Probable lipase required downstream of MPK4 for accumulation of the plant defense-potentiating molecule, salicylic acid, thus contributing to the plant innate immunity against invasive biotrophic pathogens and to defense mechanisms upon recognition of microbe-associated molecular patterns (MAMPs). Participates in the regulation of various molecular and physiological processes that influence fitness. Together with SG101, required for programmed cell death (PCD) triggered by NBS-LRR resistance proteins (e.g. RPS4, RPW8.1 and RPW8.2) in response to the fungal toxin fumonisin B1 (FB1) and avirulent pathogens (e.g. P.syringae pv. tomato strain DC3000 avrRps4 and pv. maculicola, turnip crinkle virus (TCV), and H.arabidopsidis isolates CALA2, EMOY2, EMWA1 and HIND4). Together with EDS1, confers a basal resistance by restricting the growth of virulent pathogens (e.g. H.arabidopsidis isolates NOCO2 and EMCO5, E.orontii isolate MGH, and P.syringae pv. tomato strain DC3000 or expressing HopW1-1 (HopPmaA)). Necessary for the salicylic acid-(SA-) dependent systemic acquired resistance (SAR) response that involves expression of multiple defense responses, including synthesis of the phytoalexin camalexin and expression of pathogenesis-related genes (e.g. PR1, ALD1, BGL2 and PR5) in response to pathogens, triggering a signal amplification loop that increases SA levels via EDS5 and SID2, but, together with EDS1, seems to repress the ethylene/jasmonic acid (ET/JA) defense pathway. May also function in response to abiotic stresses such as UV-C light and LSD1-dependent acclimatization to light conditions that promote excess excitation energy (EEE), probably by transducing redox signals and modulating stomatal conductance. Regulates the formation of lysigenous aerenchyma in hypocotyls in response to hypoxia, maybe via hydrogen peroxide production. Modulates leaf senescence in insect-infested tissue and triggers a phloem-based defense mechanism including antibiosis (e.g. green peach aphid (GPA), M.persicae) to limit phloem sap uptake and insect growth, thus providing an EDS1-independent basal resistance to insects. Also involved in regulation of root meristematic zone-targeted growth arrest together with EDS1 and in a VICTR-dependent manner. The chain is Lipase-like PAD4 (PAD4) from Arabidopsis thaliana (Mouse-ear cress).